Here is a 280-residue protein sequence, read N- to C-terminus: uncharacterized protein (280 aa).

This is an uncharacterized protein from Acanthamoeba polyphaga (Amoeba).